Consider the following 1157-residue polypeptide: Voltage-dependent calcium channel subunit alpha-2/delta-2 (1157 aa).

An N-terminal signal peptide occupies residues 1–18 (MAVPARTCGASWPGPVRT). Positions 1 to 37 (MAVPARTCGASWPGPVRTARPWPGRGPRPCPDPRGPA) are disordered. Over 19–1119 (ARPWPGRGPR…TEDTSDCGRG (1101 aa)) the chain is Extracellular. The segment covering 24 to 34 (GRGPRPCPDPR) has biased composition (pro residues). An N-linked (GlcNAc...) asparagine glycan is attached at N205. The region spanning 294 to 472 (DMVIIVDVSG…INTQEYLDVL (179 aa)) is the VWFA domain. Residues D300, S302, and S304 each coordinate a divalent metal cation. An MIDAS-like motif motif is present at residues 300 to 304 (DVSGS). N-linked (GlcNAc...) asparagine glycans are attached at residues N389, N421, N510, N543, N627, and N864. Cysteines 446 and 1104 form a disulfide. One can recognise a Cache domain in the interval 488-577 (WTNVYEDALG…KPQITNFREP (90 aa)). Residues 1120-1140 (ASFPPSLGVLVSLQLLLLLGL) traverse the membrane as a helical segment. Residues 1141–1157 (PPRPQPQIHSFTPSRRL) lie on the Cytoplasmic side of the membrane.

It belongs to the calcium channel subunit alpha-2/delta family. As to quaternary structure, dimer formed of alpha-2-2 and delta-2 chains; disulfide-linked. Voltage-dependent calcium channels are multisubunit complexes, consisting of alpha-1 (CACNA1), alpha-2 (CACNA2D), beta (CACNB) and delta (CACNA2D) subunits in a 1:1:1:1 ratio. Post-translationally, N-glycosylated. May be proteolytically processed into subunits alpha-2-2 and delta-2 that are disulfide-linked. It is however unclear whether such cleavage really takes place in vivo and has a functional role. In heart, it is highly expressed in atrium and at lower level in ventricle.

It localises to the membrane. In terms of biological role, the alpha-2/delta subunit of voltage-dependent calcium channels regulates calcium current density and activation/inactivation kinetics of the calcium channel. Acts as a regulatory subunit for P/Q-type calcium channel (CACNA1A), N-type (CACNA1B), L-type (CACNA1C OR CACNA1D) and possibly T-type (CACNA1G). Overexpression induces apoptosis. This Rattus norvegicus (Rat) protein is Voltage-dependent calcium channel subunit alpha-2/delta-2 (Cacna2d2).